A 344-amino-acid chain; its full sequence is Small ribosomal subunit biogenesis GTPase RsgA (344 aa).

The CP-type G domain maps to 100-268; it reads KNELSRPDYY…LIDSPGIREF (169 aa). GTP contacts are provided by residues 156 to 159 and 210 to 218; these read NKID and GQSGVGKSS. 4 residues coordinate Zn(2+): cysteine 292, cysteine 297, histidine 299, and cysteine 305.

The protein belongs to the TRAFAC class YlqF/YawG GTPase family. RsgA subfamily. Monomer. Associates with 30S ribosomal subunit, binds 16S rRNA. Zn(2+) is required as a cofactor.

The protein resides in the cytoplasm. In terms of biological role, one of several proteins that assist in the late maturation steps of the functional core of the 30S ribosomal subunit. Helps release RbfA from mature subunits. May play a role in the assembly of ribosomal proteins into the subunit. Circularly permuted GTPase that catalyzes slow GTP hydrolysis, GTPase activity is stimulated by the 30S ribosomal subunit. The chain is Small ribosomal subunit biogenesis GTPase RsgA from Actinobacillus pleuropneumoniae serotype 5b (strain L20).